The following is a 504-amino-acid chain: Probable cytochrome P450 305a1 (504 aa).

Cysteine 450 provides a ligand contact to heme.

It belongs to the cytochrome P450 family. Requires heme as cofactor.

It localises to the endoplasmic reticulum membrane. The protein resides in the microsome membrane. Its function is as follows. May be involved in the metabolism of insect hormones and in the breakdown of synthetic insecticides. The sequence is that of Probable cytochrome P450 305a1 (Cyp305a1) from Drosophila melanogaster (Fruit fly).